Here is an 86-residue protein sequence, read N- to C-terminus: Large ribosomal subunit protein bL27 (86 aa).

The segment at 1–24 (MAHKKAMGSTENTRDSNPSYLGVK) is disordered. The segment covering 9-19 (STENTRDSNPS) has biased composition (polar residues).

This sequence belongs to the bacterial ribosomal protein bL27 family.

The sequence is that of Large ribosomal subunit protein bL27 from Salinibacter ruber (strain DSM 13855 / M31).